A 319-amino-acid chain; its full sequence is rRNA adenine N-6-methyltransferase (319 aa).

A disordered region spans residues 1–59 (MARAPRSPHPARSRETSRAHPPYGTRADRAPGRGRDRDRSPDSPGNTSSRDGGRSPDRA). The segment covering 26–41 (RADRAPGRGRDRDRSP) has biased composition (basic and acidic residues). 6 residues coordinate S-adenosyl-L-methionine: asparagine 66, leucine 68, glycine 93, glutamate 114, aspartate 141, and asparagine 157.

The protein belongs to the class I-like SAM-binding methyltransferase superfamily. rRNA adenine N(6)-methyltransferase family.

The catalysed reaction is adenosine(2085) in 23S rRNA + 2 S-adenosyl-L-methionine = N(6)-dimethyladenosine(2085) in 23S rRNA + 2 S-adenosyl-L-homocysteine + 2 H(+). In terms of biological role, this protein produces a dimethylation of the adenine residue at position 2085 in 23S rRNA, resulting in reduced affinity between ribosomes and macrolide-lincosamide-streptogramin B antibiotics. The chain is rRNA adenine N-6-methyltransferase (ermSF) from Streptomyces fradiae (Streptomyces roseoflavus).